We begin with the raw amino-acid sequence, 207 residues long: Large ribosomal subunit protein uL4 (207 aa).

The disordered stretch occupies residues 49–78 (HAVKNRSAVSGGGRKPWRQKGTGRARQGSI).

This sequence belongs to the universal ribosomal protein uL4 family. Part of the 50S ribosomal subunit.

One of the primary rRNA binding proteins, this protein initially binds near the 5'-end of the 23S rRNA. It is important during the early stages of 50S assembly. It makes multiple contacts with different domains of the 23S rRNA in the assembled 50S subunit and ribosome. Functionally, forms part of the polypeptide exit tunnel. The polypeptide is Large ribosomal subunit protein uL4 (Streptococcus pneumoniae serotype 2 (strain D39 / NCTC 7466)).